We begin with the raw amino-acid sequence, 466 residues long: tRNA-2-methylthio-N(6)-dimethylallyladenosine synthase (466 aa).

The MTTase N-terminal domain occupies 22 to 139; sequence RRYYVWTVGC…VVALAPNPIY (118 aa). [4Fe-4S] cluster-binding residues include C31, C67, C101, C166, C170, and C173. In terms of domain architecture, Radical SAM core spans 152–386; that stretch reads SHPPVSVHVP…EQLQEQIATE (235 aa). The region spanning 389–449 is the TRAM domain; it reads ARFLGQTVEV…PWSLQGVPQL (61 aa).

Belongs to the methylthiotransferase family. MiaB subfamily. Monomer. [4Fe-4S] cluster is required as a cofactor.

It localises to the cytoplasm. The enzyme catalyses N(6)-dimethylallyladenosine(37) in tRNA + (sulfur carrier)-SH + AH2 + 2 S-adenosyl-L-methionine = 2-methylsulfanyl-N(6)-dimethylallyladenosine(37) in tRNA + (sulfur carrier)-H + 5'-deoxyadenosine + L-methionine + A + S-adenosyl-L-homocysteine + 2 H(+). Catalyzes the methylthiolation of N6-(dimethylallyl)adenosine (i(6)A), leading to the formation of 2-methylthio-N6-(dimethylallyl)adenosine (ms(2)i(6)A) at position 37 in tRNAs that read codons beginning with uridine. This Chloroflexus aurantiacus (strain ATCC 29366 / DSM 635 / J-10-fl) protein is tRNA-2-methylthio-N(6)-dimethylallyladenosine synthase.